The sequence spans 522 residues: Peptide chain release factor 3 (522 aa).

The tr-type G domain occupies 10–277 (ASRKTFAIIS…TFVDFAPSPS (268 aa)). GTP is bound by residues 19-26 (SHPDAGKT), 87-91 (DTPGH), and 141-144 (NKMD).

Belongs to the TRAFAC class translation factor GTPase superfamily. Classic translation factor GTPase family. PrfC subfamily.

Its subcellular location is the cytoplasm. Its function is as follows. Increases the formation of ribosomal termination complexes and stimulates activities of RF-1 and RF-2. It binds guanine nucleotides and has strong preference for UGA stop codons. It may interact directly with the ribosome. The stimulation of RF-1 and RF-2 is significantly reduced by GTP and GDP, but not by GMP. This is Peptide chain release factor 3 from Listeria monocytogenes serotype 4b (strain CLIP80459).